The primary structure comprises 256 residues: Small ribosomal subunit protein eS1A (256 aa).

N-acetylalanine; partial is present on alanine 2.

The protein belongs to the eukaryotic ribosomal protein eS1 family. Component of the small ribosomal subunit. Mature ribosomes consist of a small (40S) and a large (60S) subunit. The 40S subunit contains about 33 different proteins and 1 molecule of RNA (18S). The 60S subunit contains about 49 different proteins and 3 molecules of RNA (25S, 5.8S and 5S).

It is found in the cytoplasm. The protein is Small ribosomal subunit protein eS1A of Clavispora lusitaniae (strain ATCC 42720) (Yeast).